The chain runs to 190 residues: Lipocalin Can f 6.0101 (190 aa).

An N-terminal signal peptide occupies residues 1-15; sequence MKLLLLCLGLILVHA. The tract at residues 43–54 is igE-binding; that stretch reads SDIKEKIEENGS. 2 N-linked (GlcNAc...) asparagine glycosylation sites follow: asparagine 52 and asparagine 67. The interval 76-83 is igE-binding; sequence TKVNGKCT. Residues cysteine 82 and cysteine 175 are joined by a disulfide bond. The N-linked (GlcNAc...) asparagine glycan is linked to asparagine 90. The segment at 91–97 is igE-binding; sequence KTEKDGE. Residues 100 to 109 form a no IgE-binding region; the sequence is VVHDGYNLFR. 2 igE-binding regions span residues 125-132 and 139-152; these read NVNQEQEF and GRKP…KEKF.

Belongs to the calycin superfamily. Lipocalin family. As to quaternary structure, monomer. In terms of tissue distribution, expressed in saliva (at protein level). Expressed in dander (at protein level). According to PubMed:22104604, expressed in submaxillary gland. In contrast, according to PubMed:22515174, not expressed in submaxillary gland. Expressed in bladder and skin, but not in tongue.

Its subcellular location is the secreted. The protein is Lipocalin Can f 6.0101 of Canis lupus familiaris (Dog).